Here is a 977-residue protein sequence, read N- to C-terminus: MEEDLKKTGYLFGGNAVFVDELYRQYLANPASVDQTWQEFFAGIKDNSTVLNKSTAKIIIPYEIKKEPLNNNLSSEVLNNRHLAKPAYREEFKGDTERSTAAYIDIREDASTGSTSKLPLEAKFGKMSSLKAKEMINTYRKHAHYLANLDPLGLELRKTKNDLKLNIETFGLDNSQLEKNINITDEFVGNWNCKLSELVTKLDKTYTGSIGVEFEQIENVEEKNWLYNKLESEVTFSSEDKKTILNDLVEVEGFEQYLHTKFPGAKRFSVEGGDASIVAMSKAIDLSMNQGVEEIVIGMAHRGRLNTLTKVVGKPYKAVIAGFISGSVFPDELNVSGDVKYHLGYSSDRTIDNKKIHLSLADNPSHLEAVNPIVAGKVRAKQDILGDTKRSKVKAILVHGDAAFCGQGVVAESLSMSPLAAYDIGGILHFVINNQLGFTANAADTRASRYSTEFAKIIAAPILHVNGDDIEAVLKATNIAVEYRQKFGKDVVVEIICYRKYGHNEGDEPMYTQGKMYNIIKSKPTPGNIYANELVKSGIIDNNYFAKLKEEFKAKLDKEFEQAKNYKPEAHFLGGLWQGISRIRTQAAITGVGKKTLQDLGTKLCEIPKDFAVNPKLVKLFEARKATLTSDQPIDWATAEQLAFASLLSEGTNIRLTGQDCGRGTFSHRHSVLHNQIDDTTYIPLNNLSKTQAKYEVADSNLSEYAVLGFEYGYSLANPKNLVLWEAQFGDFANGAQIIFDQFISSSETKWLRMSGLVVLLPHAFEGQGPEHSSARLERFLQLAAEDNMYVTYPTTPASIFHLLRRQILDDTRKPLIIMSPKSLLRHKYAVSKLDELGENTTFLPVLDEVNKVDTNNITKVILCSGKVYYDLFEMRGNNSNIAIIRLEQLYPFEKKLVASLLKKYNRTQEFIWCQEEPKNMGAWRYIVSHLNDVLKEAGINNEFKYVGREESASPAVGSLQAHNKQQEKLLKEALGM.

Residues 77–125 (VLNNRHLAKPAYREEFKGDTERSTAAYIDIREDASTGSTSKLPLEAKFG) form the RPE1 insert domain.

The protein belongs to the alpha-ketoglutarate dehydrogenase family. In terms of assembly, homodimer. Part of the 2-oxoglutarate dehydrogenase (OGDH) complex composed of E1 (2-oxoglutarate dehydrogenase), E2 (dihydrolipoamide succinyltransferase) and E3 (dihydrolipoamide dehydrogenase); the complex contains multiple copies of the three enzymatic components (E1, E2 and E3). The cofactor is thiamine diphosphate.

It carries out the reaction N(6)-[(R)-lipoyl]-L-lysyl-[protein] + 2-oxoglutarate + H(+) = N(6)-[(R)-S(8)-succinyldihydrolipoyl]-L-lysyl-[protein] + CO2. In terms of biological role, E1 component of the 2-oxoglutarate dehydrogenase (OGDH) complex which catalyzes the decarboxylation of 2-oxoglutarate, the first step in the conversion of 2-oxoglutarate to succinyl-CoA and CO(2). The chain is 2-oxoglutarate dehydrogenase E1 component (sucA) from Rickettsia felis (strain ATCC VR-1525 / URRWXCal2) (Rickettsia azadi).